Reading from the N-terminus, the 572-residue chain is Urease subunit alpha (572 aa).

The region spanning 133 to 572 (GGIDLHVHYI…TSLSQRYFLF (440 aa)) is the Urease domain. Residues histidine 138, histidine 140, and lysine 221 each coordinate Ni(2+). Lysine 221 is subject to N6-carboxylysine. Histidine 223 provides a ligand contact to substrate. 2 residues coordinate Ni(2+): histidine 250 and histidine 276. The active-site Proton donor is the histidine 324. Residue aspartate 364 participates in Ni(2+) binding.

It belongs to the metallo-dependent hydrolases superfamily. Urease alpha subunit family. Heterotrimer of UreA (gamma), UreB (beta) and UreC (alpha) subunits. Three heterotrimers associate to form the active enzyme. Ni cation is required as a cofactor. Post-translationally, carboxylation allows a single lysine to coordinate two nickel ions.

The protein resides in the cytoplasm. It catalyses the reaction urea + 2 H2O + H(+) = hydrogencarbonate + 2 NH4(+). It participates in nitrogen metabolism; urea degradation; CO(2) and NH(3) from urea (urease route): step 1/1. This chain is Urease subunit alpha, found in Streptococcus thermophilus (strain CNRZ 1066).